Here is a 212-residue protein sequence, read N- to C-terminus: Lipid A acyltransferase PagP (212 aa).

The signal sequence occupies residues 1-26 (MSSTYFHSSLLAATLFSVTLTAPAFA). Over residues 29 to 44 (NTQNTPQTITTKKPQP) the composition is skewed to low complexity. A disordered region spans residues 29-50 (NTQNTPQTITTKKPQPAENTFS). Catalysis depends on residues histidine 84, aspartate 127, and serine 128.

Belongs to the lipid A palmitoyltransferase family. As to quaternary structure, homodimer.

Its subcellular location is the cell outer membrane. The catalysed reaction is a lipid A + a 1,2-diacyl-sn-glycero-3-phosphocholine = a hepta-acyl lipid A + a 2-acyl-sn-glycero-3-phosphocholine. The enzyme catalyses a lipid IVA + a 1,2-diacyl-sn-glycero-3-phosphocholine = a lipid IVB + a 2-acyl-sn-glycero-3-phosphocholine. It catalyses the reaction a lipid IIA + a 1,2-diacyl-sn-glycero-3-phosphocholine = a lipid IIB + a 2-acyl-sn-glycero-3-phosphocholine. In terms of biological role, transfers a fatty acid residue from the sn-1 position of a phospholipid to the N-linked hydroxyfatty acid chain on the proximal unit of lipid A or its precursors. The chain is Lipid A acyltransferase PagP from Proteus mirabilis (strain HI4320).